The sequence spans 199 residues: Inducible T-cell costimulator (199 aa).

Residues 1–20 (MKSGLWYFFLFCLRIKVLTG) form the signal peptide. Topologically, residues 21 to 140 (EINGSANYEM…YESQLCCQLK (120 aa)) are extracellular. The Ig-like V-type domain maps to 30–132 (MFIFHNGGVQ…LTGGYLHIYE (103 aa)). 2 disulfides stabilise this stretch: cysteine 42–cysteine 109 and cysteine 63–cysteine 83. N-linked (GlcNAc...) asparagine glycosylation is found at asparagine 89 and asparagine 110. A helical membrane pass occupies residues 141–161 (FWLPIGCAAFVVVCILGCILI). At 162–199 (CWLTKKKYSSSVHDPNGEYMFMRAVNTAKKSRLTDVTL) the chain is on the cytoplasmic side.

As to quaternary structure, homodimer; disulfide-linked. Interacts with ICOSLG. Interacts with PIK3R1. Interacts with TBK1; this interaction is critical for the maturation of T follicular regulatory cells. N-glycosylated. As to expression, activated T-cells. Highly expressed on tonsillar T-cells, which are closely associated with B-cells in the apical light zone of germinal centers, the site of terminal B-cell maturation. Expressed at lower levels in thymus, lung, lymph node and peripheral blood leukocytes. Expressed in the medulla of fetal and newborn thymus.

Its subcellular location is the cell membrane. The protein localises to the secreted. Stimulatory receptor expressed in activated or antigen-experienced T-cells that plays an important role in the immune response. Upon binding to its ligand ICOSL expressed on antigen presenting cells (APCs), delivers costimulatory signals that enhances all basic T-cell responses to a foreign antigen, namely proliferation, secretion of lymphokines including IL10, up-regulation of molecules that mediate cell-cell interaction, and effective help for antibody secretion by B-cells. Also acts as a costimulatory receptor critical for the differentiation of T follicular regulatory cells upon immune challenges such as viral infection. Mechanistically, potentiates TCR-induced calcium flux by augmenting PLCG1 activation and actin remodeling. In addition, activates PI3K signaling pathways independently of calcium flux. Essential both for efficient interaction between T and B-cells and for normal antibody responses to T-cell dependent antigens. Prevents the apoptosis of pre-activated T-cells. Plays a critical role in CD40-mediated class switching of immunoglobin isotypes. This Homo sapiens (Human) protein is Inducible T-cell costimulator (ICOS).